The chain runs to 196 residues: Putative NADH dehydrogenase/NAD(P)H nitroreductase PXO_03909 (196 aa).

Belongs to the nitroreductase family. HadB/RutE subfamily. FMN serves as cofactor.

This Xanthomonas oryzae pv. oryzae (strain PXO99A) protein is Putative NADH dehydrogenase/NAD(P)H nitroreductase PXO_03909.